Consider the following 497-residue polypeptide: Cytochrome P450 76AD1 (497 aa).

Residues A4–F24 traverse the membrane as a helical segment. C439 contributes to the heme binding site.

It belongs to the cytochrome P450 family. Heme is required as a cofactor.

Its subcellular location is the membrane. Its pathway is pigment biosynthesis; betalain biosynthesis. In terms of biological role, converts L-DOPA to cyclo-DOPA in the betalain pathway. Provides the cyclo-DOPA moiety of all red betacyanins. In Beta vulgaris (Sugar beet), this protein is Cytochrome P450 76AD1.